Consider the following 508-residue polypeptide: Photosystem II CP47 reaction center protein (508 aa).

Transmembrane regions (helical) follow at residues 21-36 (SVHIMHTALVAGWAGS), 101-115 (IVFSGLCFLAAIWHW), 140-156 (GIHLFLSGVACFGFGAF), 203-218 (IAAGTLGILAGLFHLS), 237-252 (VLSSSIAAVFFAAFVV), and 457-472 (SFALLFFFGHIWHGAR).

The protein belongs to the PsbB/PsbC family. PsbB subfamily. PSII is composed of 1 copy each of membrane proteins PsbA, PsbB, PsbC, PsbD, PsbE, PsbF, PsbH, PsbI, PsbJ, PsbK, PsbL, PsbM, PsbT, PsbX, PsbY, PsbZ, Psb30/Ycf12, at least 3 peripheral proteins of the oxygen-evolving complex and a large number of cofactors. It forms dimeric complexes. It depends on Binds multiple chlorophylls. PSII binds additional chlorophylls, carotenoids and specific lipids. as a cofactor.

The protein resides in the plastid. It localises to the chloroplast thylakoid membrane. Its function is as follows. One of the components of the core complex of photosystem II (PSII). It binds chlorophyll and helps catalyze the primary light-induced photochemical processes of PSII. PSII is a light-driven water:plastoquinone oxidoreductase, using light energy to abstract electrons from H(2)O, generating O(2) and a proton gradient subsequently used for ATP formation. This is Photosystem II CP47 reaction center protein from Morus indica (Mulberry).